A 475-amino-acid chain; its full sequence is Sulfate adenylyltransferase subunit 1 (475 aa).

The tr-type G domain maps to lysine 24 to glutamate 240. The G1 stretch occupies residues glycine 33–serine 40. Residue glycine 33–serine 40 participates in GTP binding. A G2 region spans residues glycine 91–aspartate 95. A G3 region spans residues aspartate 112–glycine 115. GTP-binding positions include aspartate 112–histidine 116 and asparagine 167–aspartate 170. A G4 region spans residues asparagine 167 to aspartate 170. The segment at serine 204–leucine 206 is G5.

This sequence belongs to the TRAFAC class translation factor GTPase superfamily. Classic translation factor GTPase family. CysN/NodQ subfamily. In terms of assembly, heterodimer composed of CysD, the smaller subunit, and CysN.

The enzyme catalyses sulfate + ATP + H(+) = adenosine 5'-phosphosulfate + diphosphate. The protein operates within sulfur metabolism; hydrogen sulfide biosynthesis; sulfite from sulfate: step 1/3. In terms of biological role, with CysD forms the ATP sulfurylase (ATPS) that catalyzes the adenylation of sulfate producing adenosine 5'-phosphosulfate (APS) and diphosphate, the first enzymatic step in sulfur assimilation pathway. APS synthesis involves the formation of a high-energy phosphoric-sulfuric acid anhydride bond driven by GTP hydrolysis by CysN coupled to ATP hydrolysis by CysD. The polypeptide is Sulfate adenylyltransferase subunit 1 (Aeromonas hydrophila subsp. hydrophila (strain ATCC 7966 / DSM 30187 / BCRC 13018 / CCUG 14551 / JCM 1027 / KCTC 2358 / NCIMB 9240 / NCTC 8049)).